Consider the following 127-residue polypeptide: Flagellar assembly factor FliW (127 aa).

Belongs to the FliW family. In terms of assembly, interacts with translational regulator CsrA and flagellin(s).

It is found in the cytoplasm. In terms of biological role, acts as an anti-CsrA protein, binds CsrA and prevents it from repressing translation of its target genes, one of which is flagellin. Binds to flagellin and participates in the assembly of the flagellum. This chain is Flagellar assembly factor FliW, found in Campylobacter concisus (strain 13826).